The sequence spans 478 residues: Protein nucleotidyltransferase YdiU (478 aa).

Residues Gly83, Gly85, Arg86, Lys106, Asp118, Gly119, Arg169, and Arg176 each contribute to the ATP site. The active-site Proton acceptor is Asp245. Asn246 and Asp255 together coordinate Mg(2+). An ATP-binding site is contributed by Asp255.

The protein belongs to the SELO family. Mg(2+) serves as cofactor. The cofactor is Mn(2+).

It carries out the reaction L-seryl-[protein] + ATP = 3-O-(5'-adenylyl)-L-seryl-[protein] + diphosphate. The catalysed reaction is L-threonyl-[protein] + ATP = 3-O-(5'-adenylyl)-L-threonyl-[protein] + diphosphate. The enzyme catalyses L-tyrosyl-[protein] + ATP = O-(5'-adenylyl)-L-tyrosyl-[protein] + diphosphate. It catalyses the reaction L-histidyl-[protein] + UTP = N(tele)-(5'-uridylyl)-L-histidyl-[protein] + diphosphate. It carries out the reaction L-seryl-[protein] + UTP = O-(5'-uridylyl)-L-seryl-[protein] + diphosphate. The catalysed reaction is L-tyrosyl-[protein] + UTP = O-(5'-uridylyl)-L-tyrosyl-[protein] + diphosphate. Functionally, nucleotidyltransferase involved in the post-translational modification of proteins. It can catalyze the addition of adenosine monophosphate (AMP) or uridine monophosphate (UMP) to a protein, resulting in modifications known as AMPylation and UMPylation. The polypeptide is Protein nucleotidyltransferase YdiU (Exiguobacterium sp. (strain ATCC BAA-1283 / AT1b)).